The chain runs to 354 residues: Bergaptol O-methyltransferase (354 aa).

His-121 provides a ligand contact to bergaptol. Ser-174, Gly-198, Asp-221, and Lys-255 together coordinate S-adenosyl-L-homocysteine. Residue His-259 coordinates bergaptol. His-259 acts as the Proton acceptor in catalysis.

Belongs to the class I-like SAM-binding methyltransferase superfamily. Cation-independent O-methyltransferase family. COMT subfamily.

The enzyme catalyses a 5-hydroxyfurocoumarin + S-adenosyl-L-methionine = a 5-methoxyfurocoumarin + S-adenosyl-L-homocysteine + H(+). The catalysed reaction is bergaptol + S-adenosyl-L-methionine = bergapten + S-adenosyl-L-homocysteine. Its activity is regulated as follows. Inhibited by Cu(2+), Ni(2+) and Co(2+). In Ammi majus (Bishop's weed), this protein is Bergaptol O-methyltransferase.